The primary structure comprises 703 residues: MSLLKERKPKKPHYIPRPPGKPFKYKCFQCPFTCNEKSHLFNHMKYGLCKNSITLVSEQDRIPKCPKSSSLDPKQTHQPEPTSKPATSKSLLNGLSSFDPKSQQGSAKEDAKENLEMQARGAHKGPQKPALQKEMAPEAILSTQPCLDSGVRHSAFVPVGEHRLRGPEDTEATEVLANSTTKASSFHAKSAFHTPGYPWKAGSPFLPPDFPHKISSTKGFGAISPYMHPAIPEYPHPFYAEHGLAAIYSPYLLTGNTPECETTLLSVYGTQDQRHFLSPAGPIPKHLNTSPSTYDHYRFFQQYHSNLPIPYGFYRPESAFPSYSLRLPSVTGITRDQSSRLLEDATLAYPASSPSELNLSSSHRKHTECEKGSPVPEAKDPSKDGQRDAEEAKMSPRAGSAATGSPGRPSPTNFTQTSQTFEGLCDLSNKAASSGTLERLQQAEQSPTAFKPVQRGSESPHSQPPANRTESPKSLQAMNGDPPAQTGSSNSFITEAPPSSPEDHSRIGPLNLSKKLETNPAATYGPMYASNAQADTLQDLPLNLSVKDLCNAWAPRPALPGPPQGAEPAATPKTETKGSEDRTSRVETPQDKAHSRTTPDVHTEDSSDEQKQTAAVALCQLAAYSPGNVRVADEEGTVQEPTRQDVPTLSATENLEAQCDLRPKGQKRTSQRDTGKSQQGTKKPKLNDPVPRVLTLRRRTRVS.

The CCHC-type zinc-finger motif lies at 25–51 (YKCFQCPFTCNEKSHLFNHMKYGLCKN). Cysteine 27, cysteine 30, histidine 43, and cysteine 49 together coordinate Zn(2+). 4 disordered regions span residues 64-113 (KCPK…DAKE), 350-527 (PASS…YGPM), 553-614 (WAPR…KQTA), and 630-703 (RVAD…TRVS). Positions 67–106 (KSSSLDPKQTHQPEPTSKPATSKSLLNGLSSFDPKSQQGS) are enriched in polar residues. Over residues 352 to 361 (SSPSELNLSS) the composition is skewed to low complexity. Basic and acidic residues predominate over residues 367-394 (TECEKGSPVPEAKDPSKDGQRDAEEAKM). Composition is skewed to polar residues over residues 410-421 (SPTNFTQTSQTF) and 456-477 (GSES…SLQA). Residues 574–611 (TETKGSEDRTSRVETPQDKAHSRTTPDVHTEDSSDEQK) show a composition bias toward basic and acidic residues. The segment covering 639-655 (QEPTRQDVPTLSATENL) has biased composition (polar residues).

Its subcellular location is the nucleus. Transcription factor involved in epidermis differentiation. Required for terminal epidermal differentiation: acts downstream of p63/TP63 and activates expression of late epidermal differentiation genes. Specifically binds to the promoter of KLF4 and promotes its expression. This Mus musculus (Mouse) protein is Zinc finger protein 750 (Znf750).